Reading from the N-terminus, the 159-residue chain is Oleosin Cor a 12 (159 aa).

Residues 1–10 are compositionally biased toward polar residues; the sequence is MADRPQQLQV. The tract at residues 1–24 is disordered; the sequence is MADRPQQLQVHPQRGHGHYEGGIK. The next 3 helical transmembrane spans lie at 45-65, 70-90, and 92-112; these read VGGT…IGLL, LFII…LAVA, and FLSS…VLNY.

This sequence belongs to the oleosin family. In terms of tissue distribution, expressed in seeds.

The protein resides in the lipid droplet. It is found in the membrane. Functionally, may have a structural role to stabilize the lipid body during desiccation of the seed by preventing coalescence of the oil. Probably interacts with both lipid and phospholipid moieties of lipid bodies. May also provide recognition signals for specific lipase anchorage in lipolysis during seedling growth. The protein is Oleosin Cor a 12 of Corylus avellana (European hazel).